An 814-amino-acid polypeptide reads, in one-letter code: Acyl-coenzyme A dehydrogenase (814 aa).

The active-site Proton acceptor is the Glu497.

The protein belongs to the acyl-CoA dehydrogenase family. Requires FAD as cofactor.

It catalyses the reaction a medium-chain 2,3-saturated fatty acyl-CoA + oxidized [electron-transfer flavoprotein] + H(+) = a medium-chain (2E)-enoyl-CoA + reduced [electron-transfer flavoprotein]. The catalysed reaction is a long-chain 2,3-saturated fatty acyl-CoA + oxidized [electron-transfer flavoprotein] + H(+) = a long-chain (2E)-enoyl-CoA + reduced [electron-transfer flavoprotein]. The protein operates within lipid metabolism; fatty acid beta-oxidation. Functionally, catalyzes the dehydrogenation of acyl-coenzymes A (acyl-CoAs) to 2-enoyl-CoAs, the first step of the beta-oxidation cycle of fatty acid degradation. Is required for the utilization of medium- and long-chain fatty acids as sole carbon sources for growth. Is needed for bacterial survival during carbone-source starvation. This chain is Acyl-coenzyme A dehydrogenase (fadE), found in Salmonella typhi.